Here is a 145-residue protein sequence, read N- to C-terminus: ATP synthase epsilon chain (145 aa).

Basic and acidic residues predominate over residues 93–104 (AEAEKARARAQE). The interval 93 to 113 (AEAEKARARAQEALKNPDASK) is disordered.

Belongs to the ATPase epsilon chain family. F-type ATPases have 2 components, CF(1) - the catalytic core - and CF(0) - the membrane proton channel. CF(1) has five subunits: alpha(3), beta(3), gamma(1), delta(1), epsilon(1). CF(0) has three main subunits: a, b and c.

It localises to the cell inner membrane. In terms of biological role, produces ATP from ADP in the presence of a proton gradient across the membrane. The polypeptide is ATP synthase epsilon chain (Francisella philomiragia subsp. philomiragia (strain ATCC 25017 / CCUG 19701 / FSC 153 / O#319-036)).